The following is a 227-amino-acid chain: Cytochrome c oxidase subunit 2 (227 aa).

At 1–14 the chain is on the mitochondrial intermembrane side; sequence MANHSQLGFQDASS. The chain crosses the membrane as a helical span at residues 15 to 45; sequence PIMEELVEFHDHALMVALAICSLVLYLLTLM. Residues 46 to 58 are Mitochondrial matrix-facing; it reads LMEKLSSNTVDAQ. Residues 59-86 form a helical membrane-spanning segment; sequence EVELIWTILPAIVLVLLALPSLQILYMM. Topologically, residues 87 to 227 are mitochondrial intermembrane; sequence DEIDEPDLTL…FEAWSSLLSS (141 aa). Cu cation contacts are provided by H160, C195, E197, C199, H203, and M206. Position 197 (E197) interacts with Mg(2+).

It belongs to the cytochrome c oxidase subunit 2 family. Component of the cytochrome c oxidase (complex IV, CIV), a multisubunit enzyme composed of 14 subunits. The complex is composed of a catalytic core of 3 subunits MT-CO1, MT-CO2 and MT-CO3, encoded in the mitochondrial DNA, and 11 supernumerary subunits COX4I, COX5A, COX5B, COX6A, COX6B, COX6C, COX7A, COX7B, COX7C, COX8 and NDUFA4, which are encoded in the nuclear genome. The complex exists as a monomer or a dimer and forms supercomplexes (SCs) in the inner mitochondrial membrane with NADH-ubiquinone oxidoreductase (complex I, CI) and ubiquinol-cytochrome c oxidoreductase (cytochrome b-c1 complex, complex III, CIII), resulting in different assemblies (supercomplex SCI(1)III(2)IV(1) and megacomplex MCI(2)III(2)IV(2)). Found in a complex with TMEM177, COA6, COX18, COX20, SCO1 and SCO2. Interacts with TMEM177 in a COX20-dependent manner. Interacts with COX20. Interacts with COX16. Cu cation is required as a cofactor.

The protein resides in the mitochondrion inner membrane. The catalysed reaction is 4 Fe(II)-[cytochrome c] + O2 + 8 H(+)(in) = 4 Fe(III)-[cytochrome c] + 2 H2O + 4 H(+)(out). Its function is as follows. Component of the cytochrome c oxidase, the last enzyme in the mitochondrial electron transport chain which drives oxidative phosphorylation. The respiratory chain contains 3 multisubunit complexes succinate dehydrogenase (complex II, CII), ubiquinol-cytochrome c oxidoreductase (cytochrome b-c1 complex, complex III, CIII) and cytochrome c oxidase (complex IV, CIV), that cooperate to transfer electrons derived from NADH and succinate to molecular oxygen, creating an electrochemical gradient over the inner membrane that drives transmembrane transport and the ATP synthase. Cytochrome c oxidase is the component of the respiratory chain that catalyzes the reduction of oxygen to water. Electrons originating from reduced cytochrome c in the intermembrane space (IMS) are transferred via the dinuclear copper A center (CU(A)) of subunit 2 and heme A of subunit 1 to the active site in subunit 1, a binuclear center (BNC) formed by heme A3 and copper B (CU(B)). The BNC reduces molecular oxygen to 2 water molecules using 4 electrons from cytochrome c in the IMS and 4 protons from the mitochondrial matrix. The polypeptide is Cytochrome c oxidase subunit 2 (MT-CO2) (Gallus gallus (Chicken)).